The primary structure comprises 705 residues: GATOR2 complex protein WDR24 (705 aa).

WD repeat units lie at residues Met-1 to Gln-28, Glu-34 to Thr-74, Gly-77 to Arg-117, Ala-121 to Ile-161, Gln-165 to Ala-207, and Glu-211 to Ala-254. A C4-type zinc finger spans residues Asn-633–Ala-655. Zn(2+) is bound by residues Cys-634, Cys-637, Cys-648, Cys-651, Cys-658, Cys-661, Cys-672, Cys-675, His-677, His-680, His-683, Cys-694, Cys-698, His-700, and Cys-702. The RING-type; atypical zinc-finger motif lies at Ser-656 to Thr-705.

This sequence belongs to the WD repeat WDR24 family. In terms of assembly, component of the GATOR2 subcomplex, composed of MIOS, SEC13, SEH1L, WDR24 and WDR59. The GATOR2 complex interacts with CASTOR1 and CASTOR2; the interaction is negatively regulated by arginine. The GATOR2 complex interacts with SESN1, SESN2 and SESN3; the interaction is negatively regulated by amino acids.

The protein resides in the lysosome membrane. The catalysed reaction is S-ubiquitinyl-[E2 ubiquitin-conjugating enzyme]-L-cysteine + [acceptor protein]-L-lysine = [E2 ubiquitin-conjugating enzyme]-L-cysteine + N(6)-ubiquitinyl-[acceptor protein]-L-lysine.. The protein operates within protein modification; protein ubiquitination. The GATOR2 complex is negatively regulated by the upstream amino acid sensors CASTOR1 and SESN2, which sequester the GATOR2 complex in absence of amino acids. In the presence of abundant amino acids, GATOR2 is released from CASTOR1 and SESN2 and activated. Its function is as follows. Catalytic component of the GATOR2 complex, a multiprotein complex that acts as an activator of the amino acid-sensing branch of the mTORC1 signaling pathway. The GATOR2 complex indirectly activates mTORC1 through the inhibition of the GATOR1 subcomplex. GATOR2 probably acts as an E3 ubiquitin-protein ligase toward GATOR1. In the presence of abundant amino acids, the GATOR2 complex mediates ubiquitination of the NPRL2 core component of the GATOR1 complex, leading to GATOR1 inactivation. In the absence of amino acids, GATOR2 is inhibited, activating the GATOR1 complex. In addition to its role in regulation of the mTORC1 complex, promotes the acidification of lysosomes and facilitates autophagic flux. Within the GATOR2 complex, WDR24 constitutes the catalytic subunit that mediates 'Lys-6'-linked ubiquitination of NPRL2. This is GATOR2 complex protein WDR24 from Gallus gallus (Chicken).